Consider the following 290-residue polypeptide: Probable aquaporin PIP2-1 (290 aa).

2 helical membrane passes run 43–63 and 80–100; these read AVIA…ATVI and CGGV…FILV. An NPA 1 motif is present at residues 112–114; sequence NPA. 3 helical membrane-spanning segments follow: residues 131–151, 173–193, and 207–227; these read ILYI…VKAF, GTGL…VFSA, and VLAP…TIPI. Residues 233–235 carry the NPA 2 motif; it reads NPA. A helical membrane pass occupies residues 255–275; that stretch reads IFWVGPFVGAAIAAFYHQYIL.

This sequence belongs to the MIP/aquaporin (TC 1.A.8) family. PIP (TC 1.A.8.11) subfamily. As to expression, expressed in roots, leaves and anthers.

It localises to the cell membrane. Its function is as follows. Aquaporins facilitate the transport of water and small neutral solutes across cell membranes. The polypeptide is Probable aquaporin PIP2-1 (PIP2-1) (Oryza sativa subsp. japonica (Rice)).